A 77-amino-acid chain; its full sequence is Structural DNA-binding protein p10 (77 aa).

A compositionally biased stretch (polar residues) spans 1–12 (MPTKAGTKSTAN). The segment at 1–38 (MPTKAGTKSTANKKTTKGPSKSGSAKGHTGKTHATALH) is disordered. A compositionally biased stretch (low complexity) spans 17 to 27 (KGPSKSGSAKG).

The protein belongs to the asfivirus P10 family.

It is found in the virion. Functionally, may play a role in genome packaging through direct interaction with viral DNA. Binds to ssDNA and dsDNA with the same apparent affinity in vitro. This is Structural DNA-binding protein p10 from Ornithodoros (relapsing fever ticks).